The primary structure comprises 254 residues: Probable triosephosphate isomerase 2 (254 aa).

Substrate is bound at residue 9–11 (NMK). Catalysis depends on His-96, which acts as the Electrophile. Glu-168 serves as the catalytic Proton acceptor. Positions 174 and 212 each coordinate substrate.

Belongs to the triosephosphate isomerase family. As to quaternary structure, homodimer.

The protein resides in the cytoplasm. It catalyses the reaction D-glyceraldehyde 3-phosphate = dihydroxyacetone phosphate. It functions in the pathway carbohydrate biosynthesis; gluconeogenesis. Its pathway is carbohydrate degradation; glycolysis; D-glyceraldehyde 3-phosphate from glycerone phosphate: step 1/1. In terms of biological role, involved in the gluconeogenesis. Catalyzes stereospecifically the conversion of dihydroxyacetone phosphate (DHAP) to D-glyceraldehyde-3-phosphate (G3P). The sequence is that of Probable triosephosphate isomerase 2 from Listeria monocytogenes serotype 4b (strain F2365).